Consider the following 363-residue polypeptide: MISNSDCDENLIKQQQQEIQDKNFLIDVAIGYTKSNALSCALKYKIPQLLEDKSKSCKELSEILKVNCDNLYRLLRTLSTIGIFIEDEVEDGVFRNSRLSNLLRNSNSDSWVNNVYLQSHPNVIQSFMYLDKTIECGTSQGMTSQGFSSAWELFEKDKSLNAHFHNTMTSFTSDEIKTILEYIDFNQYKSIVDLGGSSGELLKSIAKSSRGQLVESFINFDLPLVINQNKVNNENGAAEFDKRYSEVASDLFVDSDYPSADCYTLKFIFHMFNDDKVLTILDKISKSIKPNGKVYVFDHIVQPKNQPYAPFYFDLQMIVNFNGKERSQNEWKTIFEKSPFKIDTILILPDSKRMSVIELSLKQ.

Positions 195, 221, 250, 251, and 266 each coordinate S-adenosyl-L-methionine. Catalysis depends on His-270, which acts as the Proton acceptor.

The protein belongs to the class I-like SAM-binding methyltransferase superfamily. Cation-independent O-methyltransferase family. COMT subfamily.

It carries out the reaction (3,5-dichloro-2,4,6-trihydroxyphenyl)hexan-1-one + S-adenosyl-L-methionine = 1-(3,5-dichloro-2,6-dihydroxy-4-methoxyphenyl)hexan-1-one + S-adenosyl-L-homocysteine + H(+). Functionally, O-methyltransferase; part of the gene cluster that mediates the biosynthesis of DIF-1 (Differentiation Inducing Factor-1), a signal molecule involved in the differentiation of pstO (prestalk-O) cells. The three-step process begins with the formation of (2,4,6-trihydroxyphenyl)-1-hexan-1-one (THPH) by the polyketide synthase StlB. THPH is then dichlorinated by the flavin-dependent halogenase ChlA. The last step of DIF-1 biosynthesis is the O-methylation of dichloro-THPH (or des-methyl-DIF-1) by the methyltransferase DmtA to yield DIF-1. The polypeptide is Des-methyl DIF-1 methyltransferase A (Dictyostelium discoideum (Social amoeba)).